Consider the following 488-residue polypeptide: MYYIDGKTARWEVVIGLEVHAQILSKNKLFSDAPCDSTKGPNTAVTLFDAAMPGVLPVLNFNCVEKAIRAGLGLGGKINLYSVFERKHYFYPDLPHGYQITQNSYPIITGGCVRIRNPDKVIRINRIHIEQDAGKSIHNLAPGKTYIDLNRAGIPLMEIVSEPDISSPAEAVAYVDKLKLILQYVCASNANMEKGELRCDANVSVRRGGESGLGTRCEIKNLNSTKSLAQAIEHEAKRQVEVLESGGTIVVETKLFDVDTLSTIATRSKESATEYRYFADPDLLPLVLEEKYVEDIKASMPELPDERENRYVRELNLSPYDANVLVSNVNASRYFDALLELGHQPKLAARWITVELFGLLNKRGIKIVESPVTPALMDELLRLVHSAEISERTAKEVLRKSFEGMGSPKEIVERESLRQVTDDKVILGYVKEVLDENPTKLGEYFMGKEKMLAFLVGQVIKKSNGNASPHLVNKVLLEELERRRAQNG.

Belongs to the GatB/GatE family. GatB subfamily. As to quaternary structure, heterotrimer of A, B and C subunits.

It catalyses the reaction L-glutamyl-tRNA(Gln) + L-glutamine + ATP + H2O = L-glutaminyl-tRNA(Gln) + L-glutamate + ADP + phosphate + H(+). It carries out the reaction L-aspartyl-tRNA(Asn) + L-glutamine + ATP + H2O = L-asparaginyl-tRNA(Asn) + L-glutamate + ADP + phosphate + 2 H(+). Allows the formation of correctly charged Asn-tRNA(Asn) or Gln-tRNA(Gln) through the transamidation of misacylated Asp-tRNA(Asn) or Glu-tRNA(Gln) in organisms which lack either or both of asparaginyl-tRNA or glutaminyl-tRNA synthetases. The reaction takes place in the presence of glutamine and ATP through an activated phospho-Asp-tRNA(Asn) or phospho-Glu-tRNA(Gln). This Neorickettsia sennetsu (strain ATCC VR-367 / Miyayama) (Ehrlichia sennetsu) protein is Aspartyl/glutamyl-tRNA(Asn/Gln) amidotransferase subunit B.